The sequence spans 110 residues: Iron-sulfur cluster assembly protein CyaY (110 aa).

The protein belongs to the frataxin family.

Functionally, involved in iron-sulfur (Fe-S) cluster assembly. May act as a regulator of Fe-S biogenesis. In Pseudomonas fluorescens (strain ATCC BAA-477 / NRRL B-23932 / Pf-5), this protein is Iron-sulfur cluster assembly protein CyaY.